The following is a 354-amino-acid chain: Glycerol-3-phosphate dehydrogenase [NAD(P)+] (354 aa).

NADPH-binding residues include S27, F28, R48, and K121. Positions 121 and 149 each coordinate sn-glycerol 3-phosphate. NADPH is bound at residue A153. K204, D257, S267, R268, and N269 together coordinate sn-glycerol 3-phosphate. K204 functions as the Proton acceptor in the catalytic mechanism. R268 serves as a coordination point for NADPH. V292 and E294 together coordinate NADPH.

It belongs to the NAD-dependent glycerol-3-phosphate dehydrogenase family.

It localises to the cytoplasm. It carries out the reaction sn-glycerol 3-phosphate + NAD(+) = dihydroxyacetone phosphate + NADH + H(+). The enzyme catalyses sn-glycerol 3-phosphate + NADP(+) = dihydroxyacetone phosphate + NADPH + H(+). It participates in membrane lipid metabolism; glycerophospholipid metabolism. In terms of biological role, catalyzes the reduction of the glycolytic intermediate dihydroxyacetone phosphate (DHAP) to sn-glycerol 3-phosphate (G3P), the key precursor for phospholipid synthesis. This chain is Glycerol-3-phosphate dehydrogenase [NAD(P)+], found in Pseudomonas fluorescens (strain Pf0-1).